The following is a 695-amino-acid chain: Transketolase (695 aa).

Residue His37 coordinates substrate. Thiamine diphosphate contacts are provided by residues His77 and 126 to 128; that span reads GPL. Asp164 is a Mg(2+) binding site. Residues Gly165 and Asn194 each contribute to the thiamine diphosphate site. Residues Asn194 and Ile196 each coordinate Mg(2+). His268, Arg361, and Ser388 together coordinate substrate. Residue His268 coordinates thiamine diphosphate. Glu415 functions as the Proton donor in the catalytic mechanism. Phe441 serves as a coordination point for thiamine diphosphate. His465, Asp473, and Arg524 together coordinate substrate.

The protein belongs to the transketolase family. As to quaternary structure, homodimer. Mg(2+) is required as a cofactor. It depends on Ca(2+) as a cofactor. Mn(2+) serves as cofactor. The cofactor is Co(2+). Requires thiamine diphosphate as cofactor.

It carries out the reaction D-sedoheptulose 7-phosphate + D-glyceraldehyde 3-phosphate = aldehydo-D-ribose 5-phosphate + D-xylulose 5-phosphate. The protein operates within carbohydrate biosynthesis; Calvin cycle. Functionally, catalyzes the transfer of a two-carbon ketol group from a ketose donor to an aldose acceptor, via a covalent intermediate with the cofactor thiamine pyrophosphate. The sequence is that of Transketolase (cbbT) from Sinorhizobium medicae (strain WSM419) (Ensifer medicae).